A 330-amino-acid polypeptide reads, in one-letter code: Probable L-asparaginase (330 aa).

Positions 6 to 330 constitute an Asparaginase/glutaminase domain; it reads PTIALLATGG…EKIQEMFEEY (325 aa). T16 functions as the O-isoaspartyl threonine intermediate in the catalytic mechanism. Substrate-binding positions include S62 and 95-96; that span reads TD.

The protein belongs to the asparaginase 1 family.

Its subcellular location is the cytoplasm. The catalysed reaction is L-asparagine + H2O = L-aspartate + NH4(+). This is Probable L-asparaginase (ansA) from Helicobacter pylori (strain ATCC 700392 / 26695) (Campylobacter pylori).